The primary structure comprises 344 residues: MKFLDEAKVYVRSGDGGPGCVSFRREKFIEFGGPNGGDGGRGGDVWIECVQGLNTLIDYRYRQHFKARKGEHGMGSNCHGAKGDDAVLQVPAGTQVFAEDGETLIADMTEVGQRVRLAKGGNGGFGNAYFTTSTNRAPRHANPGQEGQEMWLILRLKLIADAGLVGLPNAGKSTFLATVTAAKPKIADYPFTTLHPGLGVVRSDAREFVLADIPGLIEGAHEGVGLGDRFLAHVERCRVLLHLVEGTSEHAGKAYKLVRRELEAYGGGLADKPEIVALSKADALDPDTLKNQVARLKRAAGGKPLVLSAASGQGVQEALRAIQAQLDGEDAADETAEPAEPWHP.

An Obg domain is found at 1–159 (MKFLDEAKVY…MWLILRLKLI (159 aa)). One can recognise an OBG-type G domain in the interval 160–327 (ADAGLVGLPN…ALRAIQAQLD (168 aa)). GTP contacts are provided by residues 166–173 (GLPNAGKS), 191–195 (FTTLH), 212–215 (DIPG), 279–282 (SKAD), and 308–310 (SAA). Residues S173 and T193 each coordinate Mg(2+).

The protein belongs to the TRAFAC class OBG-HflX-like GTPase superfamily. OBG GTPase family. In terms of assembly, monomer. The cofactor is Mg(2+).

It is found in the cytoplasm. Its function is as follows. An essential GTPase which binds GTP, GDP and possibly (p)ppGpp with moderate affinity, with high nucleotide exchange rates and a fairly low GTP hydrolysis rate. Plays a role in control of the cell cycle, stress response, ribosome biogenesis and in those bacteria that undergo differentiation, in morphogenesis control. The protein is GTPase Obg of Methylorubrum populi (strain ATCC BAA-705 / NCIMB 13946 / BJ001) (Methylobacterium populi).